The chain runs to 258 residues: DNA repair protein RecO (258 aa).

It belongs to the RecO family.

In terms of biological role, involved in DNA repair and RecF pathway recombination. The protein is DNA repair protein RecO of Lactiplantibacillus plantarum (strain ATCC BAA-793 / NCIMB 8826 / WCFS1) (Lactobacillus plantarum).